An 892-amino-acid polypeptide reads, in one-letter code: Translation initiation factor IF-2 (892 aa).

Positions 65–296 (KTRSTLNIPS…KGKRKPSTLQ (232 aa)) are disordered. Positions 68–82 (STLNIPSTGGKSKSV) are enriched in polar residues. Residues 99-217 (EQAKAEEQAQ…KMAAENEGKW (119 aa)) are compositionally biased toward basic and acidic residues. Polar residues predominate over residues 224–237 (QTESADYHVTTSQH). Residues 239-254 (RAAEDENDAKVEGDRR) show a composition bias toward basic and acidic residues. Residues 255–269 (SRTRGGKATKQKKGN) are compositionally biased toward basic residues. Over residues 270 to 283 (KLSESKADREEARA) the composition is skewed to basic and acidic residues. Residues 391-560 (HRAPVVTIMG…LLQAEVLELK (170 aa)) form the tr-type G domain. The tract at residues 400–407 (GHVDHGKT) is G1. Position 400 to 407 (400 to 407 (GHVDHGKT)) interacts with GTP. Residues 425–429 (GITQH) are G2. The interval 446–449 (DTPG) is G3. Residues 446 to 450 (DTPGH) and 500 to 503 (NKID) contribute to the GTP site. Positions 500-503 (NKID) are G4. Residues 536–538 (SAK) are G5.

Belongs to the TRAFAC class translation factor GTPase superfamily. Classic translation factor GTPase family. IF-2 subfamily.

The protein localises to the cytoplasm. Functionally, one of the essential components for the initiation of protein synthesis. Protects formylmethionyl-tRNA from spontaneous hydrolysis and promotes its binding to the 30S ribosomal subunits. Also involved in the hydrolysis of GTP during the formation of the 70S ribosomal complex. The chain is Translation initiation factor IF-2 from Yersinia pseudotuberculosis serotype O:1b (strain IP 31758).